The chain runs to 184 residues: Two-component response regulator ARR5 (184 aa).

The region spanning 26 to 154 (HVLAVDDSMV…DVKRLRDSLM (129 aa)) is the Response regulatory domain. The residue at position 87 (aspartate 87) is a 4-aspartylphosphate.

The protein belongs to the ARR family. Type-A subfamily. Two-component system major event consists of a His-to-Asp phosphorelay between a sensor histidine kinase (HK) and a response regulator (RR). In plants, the His-to-Asp phosphorelay involves an additional intermediate named Histidine-containing phosphotransfer protein (HPt). This multistep phosphorelay consists of a His-Asp-His-Asp sequential transfer of a phosphate group between first a His and an Asp of the HK protein, followed by the transfer to a conserved His of the HPt protein and finally the transfer to an Asp in the receiver domain of the RR protein. In terms of tissue distribution, predominantly expressed in roots and shoot apical meristems.

It localises to the nucleus. Functionally, functions as a response regulator involved in His-to-Asp phosphorelay signal transduction system. Phosphorylation of the Asp residue in the receiver domain activates the ability of the protein to promote the transcription of target genes. Type-A response regulators seem to act as negative regulators of the cytokinin signaling. The protein is Two-component response regulator ARR5 (ARR5) of Arabidopsis thaliana (Mouse-ear cress).